We begin with the raw amino-acid sequence, 415 residues long: Probable carboxypeptidase ACLA_013260 (415 aa).

Residues 1 to 17 (MKFPWLLLVKGAASVAA) form the signal peptide. Asn97 is a glycosylation site (N-linked (GlcNAc...) asparagine). Residue Asp145 participates in Zn(2+) binding. Glu177 functions as the Proton acceptor in the catalytic mechanism. Glu178 serves as a coordination point for Zn(2+). Asn271 is a glycosylation site (N-linked (GlcNAc...) asparagine).

Belongs to the peptidase M20A family. Requires Zn(2+) as cofactor.

The protein resides in the secreted. In Aspergillus clavatus (strain ATCC 1007 / CBS 513.65 / DSM 816 / NCTC 3887 / NRRL 1 / QM 1276 / 107), this protein is Probable carboxypeptidase ACLA_013260.